The following is a 1135-amino-acid chain: DNA-directed RNA polymerase subunit beta' (1135 aa).

Cysteine 60, cysteine 62, cysteine 75, and cysteine 78 together coordinate Zn(2+). The Mg(2+) site is built by aspartate 450, aspartate 452, and aspartate 454. 4 residues coordinate Zn(2+): cysteine 795, cysteine 869, cysteine 876, and cysteine 879.

Belongs to the RNA polymerase beta' chain family. As to quaternary structure, the RNAP catalytic core consists of 2 alpha, 1 beta, 1 beta' and 1 omega subunit. When a sigma factor is associated with the core the holoenzyme is formed, which can initiate transcription. Mg(2+) serves as cofactor. Requires Zn(2+) as cofactor.

It carries out the reaction RNA(n) + a ribonucleoside 5'-triphosphate = RNA(n+1) + diphosphate. Functionally, DNA-dependent RNA polymerase catalyzes the transcription of DNA into RNA using the four ribonucleoside triphosphates as substrates. This Clostridium tetani (strain Massachusetts / E88) protein is DNA-directed RNA polymerase subunit beta'.